The primary structure comprises 151 residues: Large ribosomal subunit protein bL9 (151 aa).

The protein belongs to the bacterial ribosomal protein bL9 family.

Its function is as follows. Binds to the 23S rRNA. This Desulfosudis oleivorans (strain DSM 6200 / JCM 39069 / Hxd3) (Desulfococcus oleovorans) protein is Large ribosomal subunit protein bL9.